A 515-amino-acid polypeptide reads, in one-letter code: ATP synthase subunit alpha (515 aa).

169–176 contributes to the ATP binding site; sequence GDRQTGKT.

Belongs to the ATPase alpha/beta chains family. As to quaternary structure, F-type ATPases have 2 components, CF(1) - the catalytic core - and CF(0) - the membrane proton channel. CF(1) has five subunits: alpha(3), beta(3), gamma(1), delta(1), epsilon(1). CF(0) has three main subunits: a(1), b(2) and c(9-12). The alpha and beta chains form an alternating ring which encloses part of the gamma chain. CF(1) is attached to CF(0) by a central stalk formed by the gamma and epsilon chains, while a peripheral stalk is formed by the delta and b chains.

It localises to the cell inner membrane. It carries out the reaction ATP + H2O + 4 H(+)(in) = ADP + phosphate + 5 H(+)(out). Functionally, produces ATP from ADP in the presence of a proton gradient across the membrane. The alpha chain is a regulatory subunit. The polypeptide is ATP synthase subunit alpha (Neisseria gonorrhoeae (strain ATCC 700825 / FA 1090)).